Reading from the N-terminus, the 439-residue chain is Trehalose-phosphatase (439 aa).

2 residues coordinate Mg(2+): Asp-163 and Asp-165. Asp-165 acts as the Proton donor/acceptor in catalysis. A substrate-binding site is contributed by 282-284 (QRK). Asp-373 contributes to the Mg(2+) binding site.

The protein belongs to the gob-1 trehalose phosphatase family. Mg(2+) serves as cofactor. In terms of tissue distribution, ubiquitously expressed. Strong expression in intestine.

The enzyme catalyses alpha,alpha-trehalose 6-phosphate + H2O = alpha,alpha-trehalose + phosphate. Catalyzes the hydrolysis of trehalose 6-phosphate to trehalose and phosphate; prevents the accumulation of toxic levels of trehalose 6-phosphate. In Caenorhabditis elegans, this protein is Trehalose-phosphatase.